A 115-amino-acid chain; its full sequence is UPF0295 protein BLi00901/BL05075 (115 aa).

2 helical membrane passes run 18-38 (LVFIGFIIMYVGVFFRSSVLL) and 41-61 (VFMILGVLSILLSTAVYFWIG).

It belongs to the UPF0295 family.

The protein localises to the cell membrane. The sequence is that of UPF0295 protein BLi00901/BL05075 from Bacillus licheniformis (strain ATCC 14580 / DSM 13 / JCM 2505 / CCUG 7422 / NBRC 12200 / NCIMB 9375 / NCTC 10341 / NRRL NRS-1264 / Gibson 46).